The primary structure comprises 161 residues: Large ribosomal subunit protein uL11 (161 aa).

This sequence belongs to the universal ribosomal protein uL11 family. Part of the ribosomal stalk of the 50S ribosomal subunit. Interacts with L10 and the large rRNA to form the base of the stalk. L10 forms an elongated spine to which L12 dimers bind in a sequential fashion forming a multimeric L10(L12)X complex.

Functionally, forms part of the ribosomal stalk which helps the ribosome interact with GTP-bound translation factors. In Methanosarcina acetivorans (strain ATCC 35395 / DSM 2834 / JCM 12185 / C2A), this protein is Large ribosomal subunit protein uL11.